Here is a 291-residue protein sequence, read N- to C-terminus: Probable plasmid-partitioning protein ParB (291 aa).

The protein belongs to the ParB family.

The sequence is that of Probable plasmid-partitioning protein ParB from Deinococcus radiodurans (strain ATCC 13939 / DSM 20539 / JCM 16871 / CCUG 27074 / LMG 4051 / NBRC 15346 / NCIMB 9279 / VKM B-1422 / R1).